Here is a 219-residue protein sequence, read N- to C-terminus: Imidazole glycerol phosphate synthase subunit HisH (219 aa).

Positions 4 to 216 (TVTVLDYGSG…VDSLPATGRN (213 aa)) constitute a Glutamine amidotransferase type-1 domain. The active-site Nucleophile is cysteine 82. Residues histidine 191 and glutamate 193 contribute to the active site.

In terms of assembly, heterodimer of HisH and HisF.

The protein localises to the cytoplasm. The catalysed reaction is 5-[(5-phospho-1-deoxy-D-ribulos-1-ylimino)methylamino]-1-(5-phospho-beta-D-ribosyl)imidazole-4-carboxamide + L-glutamine = D-erythro-1-(imidazol-4-yl)glycerol 3-phosphate + 5-amino-1-(5-phospho-beta-D-ribosyl)imidazole-4-carboxamide + L-glutamate + H(+). The enzyme catalyses L-glutamine + H2O = L-glutamate + NH4(+). It functions in the pathway amino-acid biosynthesis; L-histidine biosynthesis; L-histidine from 5-phospho-alpha-D-ribose 1-diphosphate: step 5/9. Functionally, IGPS catalyzes the conversion of PRFAR and glutamine to IGP, AICAR and glutamate. The HisH subunit catalyzes the hydrolysis of glutamine to glutamate and ammonia as part of the synthesis of IGP and AICAR. The resulting ammonia molecule is channeled to the active site of HisF. In Renibacterium salmoninarum (strain ATCC 33209 / DSM 20767 / JCM 11484 / NBRC 15589 / NCIMB 2235), this protein is Imidazole glycerol phosphate synthase subunit HisH.